Here is a 259-residue protein sequence, read N- to C-terminus: Phosphatidylinositol transfer protein 2 (259 aa).

Residues 231 to 259 are a coiled coil; it reads LTIEDIRKIEEETKAELAKKLEENKAANK.

The protein belongs to the PtdIns transfer protein family. PI transfer class IIA subfamily.

The protein resides in the cytoplasm. It is found in the golgi apparatus. In terms of biological role, catalyzes the transfer of PtdIns and phosphatidylcholine between membranes. This Dictyostelium discoideum (Social amoeba) protein is Phosphatidylinositol transfer protein 2 (pitB).